Here is a 169-residue protein sequence, read N- to C-terminus: Putative tRNA (cytidine(34)-2'-O)-methyltransferase (169 aa).

Positions 79, 104, 125, and 133 each coordinate S-adenosyl-L-methionine.

This sequence belongs to the class IV-like SAM-binding methyltransferase superfamily. RNA methyltransferase TrmH family. TrmL subfamily.

It is found in the cytoplasm. It catalyses the reaction cytidine(34) in tRNA + S-adenosyl-L-methionine = 2'-O-methylcytidine(34) in tRNA + S-adenosyl-L-homocysteine + H(+). The catalysed reaction is 5-carboxymethylaminomethyluridine(34) in tRNA(Leu) + S-adenosyl-L-methionine = 5-carboxymethylaminomethyl-2'-O-methyluridine(34) in tRNA(Leu) + S-adenosyl-L-homocysteine + H(+). Functionally, could methylate the ribose at the nucleotide 34 wobble position in tRNA. In Listeria innocua serovar 6a (strain ATCC BAA-680 / CLIP 11262), this protein is Putative tRNA (cytidine(34)-2'-O)-methyltransferase.